The primary structure comprises 524 residues: GMP synthase [glutamine-hydrolyzing] (524 aa).

One can recognise a Glutamine amidotransferase type-1 domain in the interval 9 to 207 (RILILDFGSQ…VIHICQCIPN (199 aa)). Cys86 functions as the Nucleophile in the catalytic mechanism. Catalysis depends on residues His181 and Glu183. The GMPS ATP-PPase domain occupies 208–399 (WTTKHIIEDS…LGLPADLIYR (192 aa)). 235 to 241 (SGGVDSA) contacts ATP.

In terms of assembly, homodimer.

The catalysed reaction is XMP + L-glutamine + ATP + H2O = GMP + L-glutamate + AMP + diphosphate + 2 H(+). Its pathway is purine metabolism; GMP biosynthesis; GMP from XMP (L-Gln route): step 1/1. Functionally, catalyzes the synthesis of GMP from XMP. This is GMP synthase [glutamine-hydrolyzing] from Coxiella burnetii (strain RSA 331 / Henzerling II).